The following is a 292-amino-acid chain: Polyisoprenoid diphosphate/phosphate phosphohydrolase PLPP6 (292 aa).

Disordered stretches follow at residues 1 to 34 and 66 to 86; these read MPSP…SGGG and GSFP…PPED. The Cytoplasmic portion of the chain corresponds to 1 to 131; sequence MPSPRRTIEG…SAWGSVRPLM (131 aa). Residues 10–25 show a composition bias toward low complexity; the sequence is GRPLGSSGGSSVPGSP. Phosphoserine occurs at positions 24 and 67. Positions 69–79 are enriched in low complexity; that stretch reads PLAASGPAQAA. Residues 132 to 152 traverse the membrane as a helical segment; it reads KLLEISGHGIPWLLGTLYCLL. The Lumenal portion of the chain corresponds to 153-161; the sequence is RSDSWAGRE. A helical membrane pass occupies residues 162–182; it reads VLMNLLFALLLDLLLVAVIKG. The segment at 181–189 is phosphatase sequence motif I; it reads KGLVRRRRP. The Cytoplasmic segment spans residues 183–225; that stretch reads LVRRRRPAHNQKDMFFTLSVDRYSFPSGHATRAALVSRFILNH. Positions 208 to 211 are phosphatase sequence motif II; it reads PSGH. The Proton donors role is filled by H211. A helical transmembrane segment spans residues 226-246; sequence LVLAIPLRVLVVLWAFVLGLS. The segment at 246–257 is phosphatase sequence motif III; that stretch reads SRVMLGRHNVTD. At 247–257 the chain is on the lumenal side; the sequence is RVMLGRHNVTD. H253 serves as the catalytic Nucleophile. Residues 258 to 278 traverse the membrane as a helical segment; that stretch reads VAFGFFLGYMQYSIVDYCWLS. The Cytoplasmic portion of the chain corresponds to 279–292; the sequence is PHNVPVLFVLWNQQ.

The protein belongs to the PA-phosphatase related phosphoesterase family. Phosphorylation by PKC activates the phosphatase activity towards presqualene diphosphate.

Its subcellular location is the endoplasmic reticulum membrane. It localises to the nucleus envelope. It is found in the nucleus inner membrane. The enzyme catalyses presqualene diphosphate + H2O = presqualene phosphate + phosphate + H(+). It carries out the reaction presqualene phosphate + H2O = presqualene alcohol + phosphate. The catalysed reaction is (2E,6E)-farnesyl diphosphate + H2O = (2E,6E)-farnesyl phosphate + phosphate + H(+). It catalyses the reaction (2E,6E)-farnesyl phosphate + H2O = (2E,6E)-farnesol + phosphate. The enzyme catalyses (2E,6E,10E)-geranylgeranyl diphosphate + H2O = (2E,6E,10E)-geranylgeranyl phosphate + phosphate + H(+). It carries out the reaction (2E,6E,10E)-geranylgeranyl phosphate + H2O = (2E,6E,10E)-geranylgeraniol + phosphate. The catalysed reaction is (2E)-geranyl diphosphate + H2O = (2E)-geranyl phosphate + phosphate + H(+). It catalyses the reaction (2E)-geranyl phosphate + H2O = (2E)-geraniol + phosphate. The enzyme catalyses 1,2-dihexadecanoyl-sn-glycero-3-phosphate + H2O = 1,2-dihexadecanoyl-sn-glycerol + phosphate. Functionally, magnesium-independent polyisoprenoid diphosphatase that catalyzes the sequential dephosphorylation of presqualene, farnesyl, geranyl and geranylgeranyl diphosphates. Functions in the innate immune response through the dephosphorylation of presqualene diphosphate which acts as a potent inhibitor of the signaling pathways contributing to polymorphonuclear neutrophils activation. May regulate the biosynthesis of cholesterol and related sterols by dephosphorylating presqualene and farnesyl diphosphate, two key intermediates in this biosynthetic pathway. May also play a role in protein prenylation by acting on farnesyl diphosphate and its derivative geranylgeranyl diphosphate, two precursors for the addition of isoprenoid anchors to membrane proteins. Has a lower activity towards phosphatidic acid (PA), but through phosphatidic acid dephosphorylation may participate in the biosynthesis of phospholipids and triacylglycerols. May also act on ceramide-1-P, lysophosphatidic acid (LPA) and sphing-4-enine 1-phosphate/sphingosine-1-phosphate. This Mus musculus (Mouse) protein is Polyisoprenoid diphosphate/phosphate phosphohydrolase PLPP6.